Reading from the N-terminus, the 342-residue chain is S-adenosylmethionine:tRNA ribosyltransferase-isomerase (342 aa).

The protein belongs to the QueA family. As to quaternary structure, monomer.

It is found in the cytoplasm. The catalysed reaction is 7-aminomethyl-7-carbaguanosine(34) in tRNA + S-adenosyl-L-methionine = epoxyqueuosine(34) in tRNA + adenine + L-methionine + 2 H(+). The protein operates within tRNA modification; tRNA-queuosine biosynthesis. Transfers and isomerizes the ribose moiety from AdoMet to the 7-aminomethyl group of 7-deazaguanine (preQ1-tRNA) to give epoxyqueuosine (oQ-tRNA). The sequence is that of S-adenosylmethionine:tRNA ribosyltransferase-isomerase from Geobacillus kaustophilus (strain HTA426).